The chain runs to 646 residues: Lipoteichoic acid synthase (646 aa).

At 1-7 (MSLPKKK) the chain is on the cytoplasmic side. A helical membrane pass occupies residues 8–28 (IGIFAFFLLTVFTITLKTYFS). Residues 29 to 43 (YYVDFSLGVKGLVQN) are Extracellular-facing. The chain crosses the membrane as a helical span at residues 44-64 (LILLMNPYSLIALVLSVFLFF). At 65 to 68 (KGKK) the chain is on the cytoplasmic side. The helical transmembrane segment at 69-89 (AFWFIFIGGFLLTFLLYANVV) threads the bilayer. Residues 90 to 119 (YFRFFSDFLTFSTLNQAGNVESMGGAVSAS) lie on the Extracellular side of the membrane. The helical transmembrane segment at 120–140 (FKWYDFVYFIDTIIYLAILIF) threads the bilayer. The Cytoplasmic portion of the chain corresponds to 141 to 153 (KRKWLDNRAFSKK). The helical transmembrane segment at 154-174 (FVPVVMATSVALFFLNLAFAE) threads the bilayer. Residues 175–646 (TDRPELLTRT…KSGPKGNEKK (472 aa)) are Extracellular-facing. Residues Glu-255 and Thr-300 each coordinate Mn(2+). Thr-300 is a catalytic residue. His-416 is a binding site for substrate. Mn(2+) contacts are provided by Asp-475 and His-476.

The protein belongs to the LTA synthase family. In terms of processing, proteolytically cleaved.

It localises to the cell membrane. The protein resides in the secreted. It participates in cell wall biogenesis; lipoteichoic acid biosynthesis. Catalyzes the polymerization of lipoteichoic acid (LTA) polyglycerol phosphate, a reaction that presumably uses phosphatidylglycerol (PG) as substrate. Is required for staphylococcal growth and cell division process. This chain is Lipoteichoic acid synthase (ltaS), found in Staphylococcus epidermidis (strain ATCC 35984 / DSM 28319 / BCRC 17069 / CCUG 31568 / BM 3577 / RP62A).